We begin with the raw amino-acid sequence, 113 residues long: MHEMSLCEGVIEIIEREAQQQNFAKVRTVWLEIGALSHVEPEAMRFCFSAVSHDTIAADARFEIVSVPGAAWCMACAKTVPLKQRYEPCPDCGGHQLQVTAGDELRVKELEVD.

Ni(2+) is bound at residue H2. Positions 73, 76, 89, and 92 each coordinate Zn(2+).

It belongs to the HypA/HybF family.

In terms of biological role, involved in the maturation of [NiFe] hydrogenases. Required for nickel insertion into the metal center of the hydrogenase. This Rhodopseudomonas palustris (strain BisA53) protein is Hydrogenase maturation factor HypA.